The following is a 212-amino-acid chain: Ribonuclease HII (212 aa).

In terms of domain architecture, RNase H type-2 spans 17–211 (ANLAGIDEAG…VIEALLSLEQ (195 aa)). A divalent metal cation contacts are provided by Asp-23, Glu-24, and Asp-120.

It belongs to the RNase HII family. It depends on Mn(2+) as a cofactor. Mg(2+) is required as a cofactor.

The protein resides in the cytoplasm. The catalysed reaction is Endonucleolytic cleavage to 5'-phosphomonoester.. In terms of biological role, endonuclease that specifically degrades the RNA of RNA-DNA hybrids. This chain is Ribonuclease HII, found in Chloroflexus aurantiacus (strain ATCC 29364 / DSM 637 / Y-400-fl).